Here is a 163-residue protein sequence, read N- to C-terminus: Nucleotide-binding protein PMI0103 (163 aa).

The protein belongs to the YajQ family.

In terms of biological role, nucleotide-binding protein. In Proteus mirabilis (strain HI4320), this protein is Nucleotide-binding protein PMI0103.